Reading from the N-terminus, the 348-residue chain is RNA 3'-terminal phosphate cyclase (348 aa).

ATP-binding positions include glutamine 107 and 290-294 (HLADQ). Histidine 316 (tele-AMP-histidine intermediate) is an active-site residue.

It belongs to the RNA 3'-terminal cyclase family. Type 1 subfamily.

The protein resides in the cytoplasm. It carries out the reaction a 3'-end 3'-phospho-ribonucleotide-RNA + ATP = a 3'-end 2',3'-cyclophospho-ribonucleotide-RNA + AMP + diphosphate. In terms of biological role, catalyzes the conversion of 3'-phosphate to a 2',3'-cyclic phosphodiester at the end of RNA. The mechanism of action of the enzyme occurs in 3 steps: (A) adenylation of the enzyme by ATP; (B) transfer of adenylate to an RNA-N3'P to produce RNA-N3'PP5'A; (C) and attack of the adjacent 2'-hydroxyl on the 3'-phosphorus in the diester linkage to produce the cyclic end product. The biological role of this enzyme is unknown but it is likely to function in some aspects of cellular RNA processing. This is RNA 3'-terminal phosphate cyclase (rtcA) from Nostoc sp. (strain PCC 7120 / SAG 25.82 / UTEX 2576).